A 179-amino-acid polypeptide reads, in one-letter code: Ribosome maturation factor RimM (179 aa).

A PRC barrel domain is found at 102–179 (DGEYYWYQLE…EMKVDWDADF (78 aa)).

Belongs to the RimM family. In terms of assembly, binds ribosomal protein uS19.

It localises to the cytoplasm. Its function is as follows. An accessory protein needed during the final step in the assembly of 30S ribosomal subunit, possibly for assembly of the head region. Essential for efficient processing of 16S rRNA. May be needed both before and after RbfA during the maturation of 16S rRNA. It has affinity for free ribosomal 30S subunits but not for 70S ribosomes. In Pseudomonas syringae pv. syringae (strain B728a), this protein is Ribosome maturation factor RimM.